The primary structure comprises 403 residues: Ribose-phosphate pyrophosphokinase 1, chloroplastic (403 aa).

A chloroplast-targeting transit peptide spans Met-1–Lys-49. Mg(2+) is bound by residues Asp-217, His-219, Asp-228, and Asp-232. The interval Gly-303–Thr-318 is binding of phosphoribosylpyrophosphate.

Belongs to the ribose-phosphate pyrophosphokinase family. It depends on Mg(2+) as a cofactor.

The protein localises to the plastid. It is found in the chloroplast. It catalyses the reaction D-ribose 5-phosphate + ATP = 5-phospho-alpha-D-ribose 1-diphosphate + AMP + H(+). This chain is Ribose-phosphate pyrophosphokinase 1, chloroplastic (PRS1), found in Arabidopsis thaliana (Mouse-ear cress).